Reading from the N-terminus, the 505-residue chain is Alkylglycerol monooxygenase (505 aa).

2 helical membrane passes run 56-76 (VSAWWLVFLTAEFFILFISGH) and 104-124 (AVAIFLYVIVWDNWRILELPW). The 133-residue stretch at 130–262 (WIFCLFFQDF…FIIWDKMFNT (133 aa)) folds into the Fatty acid hydroxylase domain. The short motif at 145-149 (HRAVH) is the Histidine box-1 element. Positions 158-162 (HTIHH) match the Histidine box-2 motif. The short motif at 234–238 (HRVHH) is the Histidine box-3 element. Transmembrane regions (helical) follow at residues 366-386 (ILVKVYVASSFLLLLAIFFHF), 396-416 (LDCTVKIAYFVVTMQCFGAFF), 430-450 (CCGVLIYYGVLMFDHIGAGTH), and 452-472 (LFVISLHIMAIALWTTDVLVE).

It belongs to the sterol desaturase family. TMEM195 subfamily. Requires Fe cation as cofactor.

It localises to the endoplasmic reticulum membrane. It catalyses the reaction 1-O-(1,2-saturated-alkyl)-sn-glycerol + (6R)-L-erythro-5,6,7,8-tetrahydrobiopterin + O2 = a 1-(1-hydroxyalkyl)-sn-glycerol + (6R)-L-erythro-6,7-dihydrobiopterin + H2O. Glyceryl-ether monooxygenase that cleaves the O-alkyl bond of ether lipids. This Caenorhabditis elegans protein is Alkylglycerol monooxygenase.